The primary structure comprises 244 residues: 7-cyano-7-deazaguanine synthase (244 aa).

An ATP-binding site is contributed by Phe-14–Val-24. Residues Cys-202, Cys-217, Cys-220, and Cys-223 each contribute to the Zn(2+) site.

It belongs to the QueC family. Zn(2+) is required as a cofactor.

It carries out the reaction 7-carboxy-7-deazaguanine + NH4(+) + ATP = 7-cyano-7-deazaguanine + ADP + phosphate + H2O + H(+). The protein operates within purine metabolism; 7-cyano-7-deazaguanine biosynthesis. Functionally, catalyzes the ATP-dependent conversion of 7-carboxy-7-deazaguanine (CDG) to 7-cyano-7-deazaguanine (preQ(0)). This chain is 7-cyano-7-deazaguanine synthase, found in Burkholderia ambifaria (strain MC40-6).